We begin with the raw amino-acid sequence, 305 residues long: MSSRYTPSEMAQALGAGLLSFPVTHFDADMAFDEPAYRSNLDWLSSHPAAGLFAAGGTGELFSLTLDEVDRAVRAAVTQTAGRMPVIAPAGYGTAIAVAMAQAAERNDADGILLFPPYLTECDADGVAEHVERVCKATSLGVIVYGRANARLDDVALARVAERCPNLMGYKDGIGDVDRMTRIYARLGDRLLYVGGLPTAETFALPYLEMGVTTYSSAIFNFLPEWALSFYAAVRARDHATIYRELNDFVLPYTVLRNRRAGYAVSIVKAGMRAVGRPAGPVRTPLADLTEDEFAQPTQLIGGRR.

Belongs to the DapA family.

It carries out the reaction 5-dehydro-4-deoxy-D-glucarate + H(+) = 2,5-dioxopentanoate + CO2 + H2O. The protein operates within carbohydrate acid metabolism; D-glucarate degradation; 2,5-dioxopentanoate from D-glucarate: step 2/2. This Xanthomonas campestris pv. campestris (strain 8004) protein is Probable 5-dehydro-4-deoxyglucarate dehydratase.